The sequence spans 274 residues: Large ribosomal subunit protein uL2 (274 aa).

Disordered regions lie at residues 30 to 54 and 223 to 274; these read EKSLAFGKKSSGGRNNNGRITIRHK and VAMN…QLKG. Residues 36 to 48 are compositionally biased toward low complexity; the sequence is GKKSSGGRNNNGR. The segment covering 263–274 has biased composition (basic and acidic residues); that stretch reads KFSDKYIKQLKG.

The protein belongs to the universal ribosomal protein uL2 family. As to quaternary structure, part of the 50S ribosomal subunit. Forms a bridge to the 30S subunit in the 70S ribosome.

Its function is as follows. One of the primary rRNA binding proteins. Required for association of the 30S and 50S subunits to form the 70S ribosome, for tRNA binding and peptide bond formation. It has been suggested to have peptidyltransferase activity; this is somewhat controversial. Makes several contacts with the 16S rRNA in the 70S ribosome. This Wolbachia sp. subsp. Brugia malayi (strain TRS) protein is Large ribosomal subunit protein uL2.